The chain runs to 207 residues: Large ribosomal subunit protein uL4 (207 aa).

Residues 44–71 (RRQGTQSAKTRAEVRGGGRKPWKQKGTG) form a disordered region. Positions 60–71 (GGRKPWKQKGTG) are enriched in basic residues.

The protein belongs to the universal ribosomal protein uL4 family. In terms of assembly, part of the 50S ribosomal subunit.

Functionally, one of the primary rRNA binding proteins, this protein initially binds near the 5'-end of the 23S rRNA. It is important during the early stages of 50S assembly. It makes multiple contacts with different domains of the 23S rRNA in the assembled 50S subunit and ribosome. Its function is as follows. Forms part of the polypeptide exit tunnel. In Alkaliphilus oremlandii (strain OhILAs) (Clostridium oremlandii (strain OhILAs)), this protein is Large ribosomal subunit protein uL4.